A 289-amino-acid polypeptide reads, in one-letter code: 4-hydroxy-tetrahydrodipicolinate synthase (289 aa).

A pyruvate-binding site is contributed by threonine 45. Tyrosine 133 functions as the Proton donor/acceptor in the catalytic mechanism. Lysine 161 functions as the Schiff-base intermediate with substrate in the catalytic mechanism. Isoleucine 200 is a pyruvate binding site.

This sequence belongs to the DapA family. In terms of assembly, homotetramer; dimer of dimers.

The protein localises to the cytoplasm. It carries out the reaction L-aspartate 4-semialdehyde + pyruvate = (2S,4S)-4-hydroxy-2,3,4,5-tetrahydrodipicolinate + H2O + H(+). Its pathway is amino-acid biosynthesis; L-lysine biosynthesis via DAP pathway; (S)-tetrahydrodipicolinate from L-aspartate: step 3/4. Catalyzes the condensation of (S)-aspartate-beta-semialdehyde [(S)-ASA] and pyruvate to 4-hydroxy-tetrahydrodipicolinate (HTPA). This Coxiella burnetii (strain Dugway 5J108-111) protein is 4-hydroxy-tetrahydrodipicolinate synthase.